The primary structure comprises 310 residues: HPr kinase/phosphorylase (310 aa).

Active-site residues include His-136 and Lys-157. ATP is bound at residue Gly-151–Ser-158. Residue Ser-158 coordinates Mg(2+). Asp-175 functions as the Proton acceptor; for phosphorylation activity. Proton donor; for dephosphorylation activity in the catalytic mechanism. The segment at Leu-199 to Asn-208 is important for the catalytic mechanism of both phosphorylation and dephosphorylation. Glu-200 contributes to the Mg(2+) binding site. Residue Arg-241 is part of the active site. The interval Pro-262–Arg-267 is important for the catalytic mechanism of dephosphorylation.

It belongs to the HPrK/P family. Homohexamer. Mg(2+) is required as a cofactor.

It catalyses the reaction [HPr protein]-L-serine + ATP = [HPr protein]-O-phospho-L-serine + ADP + H(+). The catalysed reaction is [HPr protein]-O-phospho-L-serine + phosphate + H(+) = [HPr protein]-L-serine + diphosphate. Catalyzes the ATP- as well as the pyrophosphate-dependent phosphorylation of a specific serine residue in HPr, a phosphocarrier protein of the phosphoenolpyruvate-dependent sugar phosphotransferase system (PTS). HprK/P also catalyzes the pyrophosphate-producing, inorganic phosphate-dependent dephosphorylation (phosphorolysis) of seryl-phosphorylated HPr (P-Ser-HPr). The two antagonistic activities of HprK/P are regulated by several intracellular metabolites, which change their concentration in response to the absence or presence of rapidly metabolisable carbon sources (glucose, fructose, etc.) in the growth medium. Therefore, by controlling the phosphorylation state of HPr, HPrK/P is a sensor enzyme that plays a major role in the regulation of carbon metabolism and sugar transport: it mediates carbon catabolite repression (CCR), and regulates PTS-catalyzed carbohydrate uptake and inducer exclusion. The chain is HPr kinase/phosphorylase from Staphylococcus epidermidis (strain ATCC 35984 / DSM 28319 / BCRC 17069 / CCUG 31568 / BM 3577 / RP62A).